Reading from the N-terminus, the 240-residue chain is MSNEAGGGIHKLICLLCDSQFSQDVTWRALFLLKPDEKVCYSCRSKLKKITGHICPLCGRPQSVHAVCRDCEVWRTRIRDSLLLRQNRSVYTYNDMMKETLSRFKFRGDAEIINAFKSDFSSTFSKVYPDKHFVLVPIPLSKEREEERGFNQAHLLAECLDRPSHHPLIRLNNEKQSKKKKTERLLSECIFDTKNNSAEGMNIILIDDLYTTGATLHFAARCLLEKGKAASVSSFTLIRS.

This sequence belongs to the ComF/GntX family. Monomer and dimer in solution. Interacts with ComFA and DprA; ComFA-ComFC form rings about 150 Angstroms in diameter with apparent 6-fold symmetry.

Involved in transformation (genetic competence for DNA uptake). This Bacillus subtilis (strain 168) protein is Competence protein ComFC (comFC).